A 478-amino-acid polypeptide reads, in one-letter code: Argininosuccinate lyase (478 aa).

This sequence belongs to the lyase 1 family. Argininosuccinate lyase subfamily.

It is found in the cytoplasm. The catalysed reaction is 2-(N(omega)-L-arginino)succinate = fumarate + L-arginine. It functions in the pathway amino-acid biosynthesis; L-arginine biosynthesis; L-arginine from L-ornithine and carbamoyl phosphate: step 3/3. The chain is Argininosuccinate lyase from Rhodospirillum rubrum (strain ATCC 11170 / ATH 1.1.1 / DSM 467 / LMG 4362 / NCIMB 8255 / S1).